Reading from the N-terminus, the 560-residue chain is DNA ligase B (560 aa).

The active-site N6-AMP-lysine intermediate is the Lys124.

The protein belongs to the NAD-dependent DNA ligase family. LigB subfamily.

It carries out the reaction NAD(+) + (deoxyribonucleotide)n-3'-hydroxyl + 5'-phospho-(deoxyribonucleotide)m = (deoxyribonucleotide)n+m + AMP + beta-nicotinamide D-nucleotide.. In terms of biological role, catalyzes the formation of phosphodiester linkages between 5'-phosphoryl and 3'-hydroxyl groups in double-stranded DNA using NAD as a coenzyme and as the energy source for the reaction. This is DNA ligase B from Escherichia coli O81 (strain ED1a).